The sequence spans 343 residues: MSAFTPASEVLLRHSDDFEQSRILFAGDLQDDLPARLDTAASRAHTQQFHHWQVLSRQMGDNARFSLVATVDDVADCDTLIYYWPKNKPEAQFQLMNLLSLLPVGTDIFVVGENRSGVRSAEQMLADYAPLNKVDSARRCGLYFGRLEKQPVFDADKFWGEYSVDGLTVKTLPGVFSRDGLDVGSQLLLSTLTPHTKGKVLDVGCGAGVLSVAFARHSPKIRLTLCDVSAPAVEASRATLAANCVEGEVFASNVFSEVKGRFDMIISNPPFHDGMQTSLDAAQTLIRGAVRHLNSGGELRIVANAFLPYPDVLDETFGFHEVIAQTGRFKVYRAIMTRQAKKG.

The protein belongs to the methyltransferase superfamily. RsmC family. Monomer.

It localises to the cytoplasm. It carries out the reaction guanosine(1207) in 16S rRNA + S-adenosyl-L-methionine = N(2)-methylguanosine(1207) in 16S rRNA + S-adenosyl-L-homocysteine + H(+). Specifically methylates the guanine in position 1207 of 16S rRNA in the 30S particle. This Shigella sonnei (strain Ss046) protein is Ribosomal RNA small subunit methyltransferase C.